Consider the following 146-residue polypeptide: Hemoglobin subunit beta-1 (146 aa).

Positions 2–146 (KWSDKERAVI…VVSALGKQYC (145 aa)) constitute a Globin domain. Heme b contacts are provided by His-63 and His-92.

This sequence belongs to the globin family. In terms of assembly, hb1 is a heterotetramer of two alpha-1 chains and two beta-1 chains; Hb2 is a heterotetramer of two alpha-2 chains and two beta-1 chains. In terms of tissue distribution, red blood cells.

In terms of biological role, involved in oxygen transport from gills to the various peripheral tissues. This Anarhichas minor (Arctic spotted wolffish) protein is Hemoglobin subunit beta-1 (hbb1).